The following is a 4249-amino-acid chain: Fibrocystin-L (4249 aa).

The signal sequence occupies residues M1–A20. The Extracellular segment spans residues D21–T4222. IPT/TIG domains are found at residues P31 to S132, P146 to Y255, P270 to Y361, P1067 to Y1153, S1155 to Y1234, P1240 to A1323, L1329 to Y1468, P1565 to K1648, P1658 to Y1742, P1748 to I1827, P1830 to Y1909, P1915 to Y1996, L1998 to Y2084, and P2090 to Y2175. The 156-residue stretch at P337–D492 folds into the PA14 domain. O-linked (GalNAc...) threonine glycans are attached at residues T1297 and T1359. T1838 carries O-linked (GalNAc...) threonine glycosylation. Residues S2183–H2303 form the G8 1 domain. PbH1 repeat units follow at residues Q2484–N2506, T2507–D2529, N2565–M2587, G2664–R2686, and S2732–V2755. The region spanning S3035 to E3173 is the G8 2 domain. 5 PbH1 repeats span residues K3292–T3314, T3354–G3376, G3415–G3437, P3470–T3492, and T3493–V3514. O-linked (GalNAc...) threonine glycosylation occurs at T3735. The interval L4183–A4208 is disordered. Over residues G4197–A4208 the composition is skewed to low complexity. Residues A4223–N4243 form a helical membrane-spanning segment. Residues T4244–N4249 are Cytoplasmic-facing.

As to expression, expressed in neurons in the hippocampus and the cerebral cortex (at protein level). Transiently expressed at high levels in inner ear hair cells, predominantly in outer hair cells, during early postnatal development (at protein level).

It is found in the membrane. The protein localises to the cell projection. The protein resides in the stereocilium membrane. In terms of biological role, component of hair-cell stereocilia coat. Required for normal hearing. The chain is Fibrocystin-L (Pkhd1l1) from Mus musculus (Mouse).